We begin with the raw amino-acid sequence, 170 residues long: Putative 3-methyladenine DNA glycosylase (170 aa).

The protein belongs to the DNA glycosylase MPG family.

The chain is Putative 3-methyladenine DNA glycosylase from Sodalis glossinidius.